A 71-amino-acid chain; its full sequence is Translation initiation factor IF-1 (71 aa).

Residues 1–71 (MSKDDLIQFT…LTKGRVIHRH (71 aa)) form the S1-like domain.

Belongs to the IF-1 family. As to quaternary structure, component of the 30S ribosomal translation pre-initiation complex which assembles on the 30S ribosome in the order IF-2 and IF-3, IF-1 and N-formylmethionyl-tRNA(fMet); mRNA recruitment can occur at any time during PIC assembly.

The protein localises to the cytoplasm. One of the essential components for the initiation of protein synthesis. Stabilizes the binding of IF-2 and IF-3 on the 30S subunit to which N-formylmethionyl-tRNA(fMet) subsequently binds. Helps modulate mRNA selection, yielding the 30S pre-initiation complex (PIC). Upon addition of the 50S ribosomal subunit IF-1, IF-2 and IF-3 are released leaving the mature 70S translation initiation complex. The protein is Translation initiation factor IF-1 of Rickettsia prowazekii (strain Madrid E).